The sequence spans 691 residues: Protein phosphatase Slingshot homolog (691 aa).

The DEK-C domain occupies 236–291 (EETERIIKLKLRDILRESDLENITSKEVRSALEQHTLCALQDYKEFIDNEMIIILA). Positions 295 to 436 (RPSEIFPYLY…LQTYQGILGA (142 aa)) constitute a Tyrosine-protein phosphatase domain. The active-site Phosphocysteine intermediate is the Cys-380. Positions 532–580 (NEHVLSKEQIIQEEKKVMELEKGPEWVVKNNVLEEMKETEERELPNFEL) form a coiled coil. Residues 585–620 (NQSRERDQETIKESSVITQGSSSLDEVFESSTPTRS) form a disordered region. Basic and acidic residues predominate over residues 587–596 (SRERDQETIK). Over residues 597–619 (ESSVITQGSSSLDEVFESSTPTR) the composition is skewed to polar residues.

This sequence belongs to the protein-tyrosine phosphatase family. Interacts with actin and this stimulates phosphatase activity.

Its subcellular location is the cytoplasm. It is found in the cytoskeleton. The protein resides in the cleavage furrow. It localises to the midbody. The catalysed reaction is O-phospho-L-tyrosyl-[protein] + H2O = L-tyrosyl-[protein] + phosphate. It catalyses the reaction O-phospho-L-seryl-[protein] + H2O = L-seryl-[protein] + phosphate. It carries out the reaction O-phospho-L-threonyl-[protein] + H2O = L-threonyl-[protein] + phosphate. Functionally, protein phosphatase which regulates actin filament dynamics. Dephosphorylates and activates the actin binding/depolymerizing factor cofilin, which subsequently binds to actin filaments and stimulates their disassembly. Required for completion of the gastrulation movement and for cytokinesis. The protein is Protein phosphatase Slingshot homolog (ssh) of Xenopus laevis (African clawed frog).